The chain runs to 176 residues: Oligoribonuclease (176 aa).

Residues 2–159 enclose the Exonuclease domain; the sequence is EMTGLNPETD…DDILESIEEM (158 aa). Tyr-117 is an active-site residue.

The protein belongs to the oligoribonuclease family.

It localises to the cytoplasm. Its function is as follows. 3'-to-5' exoribonuclease specific for small oligoribonucleotides. This chain is Oligoribonuclease, found in Neisseria gonorrhoeae (strain ATCC 700825 / FA 1090).